Here is a 225-residue protein sequence, read N- to C-terminus: ATP-dependent Clp protease proteolytic subunit (225 aa).

The active-site Nucleophile is Ser101. Residue His126 is part of the active site.

Belongs to the peptidase S14 family. In terms of assembly, component of the chloroplastic Clp protease core complex.

It is found in the plastid. Its subcellular location is the chloroplast stroma. It carries out the reaction Hydrolysis of proteins to small peptides in the presence of ATP and magnesium. alpha-casein is the usual test substrate. In the absence of ATP, only oligopeptides shorter than five residues are hydrolyzed (such as succinyl-Leu-Tyr-|-NHMec, and Leu-Tyr-Leu-|-Tyr-Trp, in which cleavage of the -Tyr-|-Leu- and -Tyr-|-Trp bonds also occurs).. Cleaves peptides in various proteins in a process that requires ATP hydrolysis. Has a chymotrypsin-like activity. Plays a major role in the degradation of misfolded proteins. This chain is ATP-dependent Clp protease proteolytic subunit, found in Chlorokybus atmophyticus (Soil alga).